The chain runs to 51 residues: uncharacterized protein (51 aa).

This is an uncharacterized protein from Borreliella burgdorferi (strain ATCC 35210 / DSM 4680 / CIP 102532 / B31) (Borrelia burgdorferi).